A 1011-amino-acid polypeptide reads, in one-letter code: Liprin-beta-1 (1011 aa).

Residue Ser37 is modified to Phosphoserine. Thr39 bears the Phosphothreonine mark. Ser40 carries the phosphoserine modification. Residues 156–405 (QQELLSRTSL…VPEEFHTTIL (250 aa)) are a coiled coil. Position 322 is an N6-acetyllysine (Lys322). 2 disordered regions span residues 420 to 439 (ETSEKSKLTPKPETSFEEND) and 463 to 634 (KSSS…RDLG). A phosphoserine mark is found at Ser434 and Ser466. Positions 470 to 492 (LKKETSDGEKETIQKTSEDRAPA) are enriched in basic and acidic residues. A Glycyl lysine isopeptide (Lys-Gly) (interchain with G-Cter in SUMO2) cross-link involves residue Lys471. Ser523 and Ser540 each carry phosphoserine. Residues 546-556 (ETEKETAEHLD) are compositionally biased toward basic and acidic residues. Ser579 is modified (phosphoserine). Basic residues predominate over residues 584 to 598 (KKSRGIMKLFGKLRR). Ser601 and Ser636 each carry phosphoserine. 2 consecutive SAM domains span residues 647–711 (WTKE…LGSE) and 719–782 (LDFN…LRIN). Ser794 carries the post-translational modification Phosphoserine. The region spanning 804 to 876 (VQKWTNHRVM…ATHFNLLIGA (73 aa)) is the SAM 3 domain. A phosphoserine mark is found at Ser999, Ser1001, and Ser1003. Phosphothreonine is present on Thr1005.

This sequence belongs to the liprin family. Liprin-beta subfamily. In terms of assembly, forms homodimers and heterodimers. Interacts with S100A4 in a Ca(2+)-dependent mode. Part of a cortical microtubule stabilization complex (CMSC) composed of KANK1, PPFIA1, PPFIBP1, ERC1/ELKS, PHLDB2/LL5beta, CLASPs, KIF21A and possibly additional interactors; within CMSCs KANK1 and PHLDB2/LL5beta seem to be the core components for recruiting microtubule-binding proteins KIF21A and CLASPs, whereas PPFIA1, PPFIBP1 and ERC1/ELKS serve as scaffolds for protein clustering. Interacts with KANK1 (via CC1 domain, residues 244-339). Widely expressed. Absent in liver.

The protein resides in the cytoplasm. It is found in the cell cortex. May regulate the disassembly of focal adhesions. Did not bind receptor-like tyrosine phosphatases type 2A. The protein is Liprin-beta-1 (PPFIBP1) of Homo sapiens (Human).